A 391-amino-acid polypeptide reads, in one-letter code: tRNA-specific 2-thiouridylase MnmA (391 aa).

ATP contacts are provided by residues 9–16 and M35; that span reads GMSGGVDS. Positions 95 to 97 are interaction with target base in tRNA; it reads NPD. Catalysis depends on C100, which acts as the Nucleophile. Cysteines 100 and 196 form a disulfide. ATP is bound at residue G124. The tract at residues 146–148 is interaction with tRNA; sequence KDQ. The active-site Cysteine persulfide intermediate is C196. Positions 308 to 309 are interaction with tRNA; that stretch reads RY. The segment covering 372 to 382 has biased composition (polar residues); that stretch reads TGQPGQATSTG. The disordered stretch occupies residues 372–391; the sequence is TGQPGQATSTGHAPALAEAR.

Belongs to the MnmA/TRMU family.

The protein resides in the cytoplasm. It carries out the reaction S-sulfanyl-L-cysteinyl-[protein] + uridine(34) in tRNA + AH2 + ATP = 2-thiouridine(34) in tRNA + L-cysteinyl-[protein] + A + AMP + diphosphate + H(+). Its function is as follows. Catalyzes the 2-thiolation of uridine at the wobble position (U34) of tRNA, leading to the formation of s(2)U34. The chain is tRNA-specific 2-thiouridylase MnmA from Burkholderia cenocepacia (strain ATCC BAA-245 / DSM 16553 / LMG 16656 / NCTC 13227 / J2315 / CF5610) (Burkholderia cepacia (strain J2315)).